The sequence spans 101 residues: MDKSKQPFRKSKRSFRRRLPPIGSGDQIDYRNMSLISRFLSEQGKILSRRTNRLTLKQQRLITIAIKQARILSLLPFRNNEKQLERVESIPRTTGPRTKNK.

Over residues M1 to L19 the composition is skewed to basic residues. The interval M1–D26 is disordered.

The protein belongs to the bacterial ribosomal protein bS18 family. As to quaternary structure, part of the 30S ribosomal subunit.

Its subcellular location is the plastid. It localises to the chloroplast. The sequence is that of Small ribosomal subunit protein bS18c from Phalaenopsis aphrodite subsp. formosana (Moth orchid).